A 1072-amino-acid polypeptide reads, in one-letter code: LRR receptor-like serine/threonine-protein kinase RGI5 (1072 aa).

Positions 1–21 (MERERSNFFFLFLFCSWVSMA) are cleaved as a signal peptide. Residues 22–706 (QPTLSLSSDG…NGVKSPKIVA (685 aa)) lie on the Extracellular side of the membrane. The cysteines at positions 56 and 63 are disulfide-linked. LRR repeat units lie at residues 66 to 89 (DNRVISVSIPDTFLNLSSIPDLSS), 90 to 113 (LSSLQFLNLSSTNLSGPIPPSFGK), 114 to 138 (LTHLRLLDLSSNSLSGPIPSELGRL), 140 to 162 (TLQFLILNANKLSGSIPSQISNL), 164 to 185 (ALQVLCLQDNLLNGSIPSSFGS), 187 to 211 (VSLQQFRLGGNTNLGGPIPAQLGFL), 212 to 234 (KNLTTLGFAASGLSGSIPSTFGN), 235 to 259 (LVNLQTLALYDTEISGTIPPQLGLC), 260 to 283 (SELRNLYLHMNKLTGSIPKELGKL), 285 to 307 (KITSLLLWGNSLSGVIPPEISNC), 308 to 331 (SSLVVFDVSANDLTGDIPGDLGKL), 332 to 355 (VWLEQLQLSDNMFTGQIPWELSNC), 356 to 379 (SSLIALQLDKNKLSGSIPSQIGNL), 381 to 402 (SLQSFFLWENSISGTIPSSFGN), 403 to 427 (CTDLVALDLSRNKLTGRIPEELFSL), 429 to 451 (RLSKLLLLGNSLSGGLPKSVAKC), 452 to 475 (QSLVRLRVGENQLSGQIPKEIGEL), 477 to 499 (NLVFLDLYMNHFSGGLPYEISNI), 500 to 523 (TVLELLDVHNNYITGDIPAQLGNL), 524 to 546 (VNLEQLDLSRNSFTGNIPLSFGN), 548 to 571 (SYLNKLILNNNLLTGQIPKSIKNL), 572 to 595 (QKLTLLDLSYNSLSGEIPQELGQV), 597 to 619 (SLTINLDLSYNTFTGNIPETFSD), 620 to 642 (LTQLQSLDLSSNSLHGDIKVLGS), and 643 to 667 (LTSLASLNISCNNFSGPIPSTPFFK). 3 N-linked (GlcNAc...) asparagine glycosylation sites follow: asparagine 80, asparagine 97, and asparagine 102. The short motif at 171 to 172 (QD) is the Small peptide recognition element. Residue asparagine 176 is glycosylated (N-linked (GlcNAc...) asparagine). The short motif at 193–196 (RLGG) is the Small peptide recognition element. An N-linked (GlcNAc...) asparagine glycan is attached at asparagine 213. Short sequence motifs (small peptide recognition) lie at residues 216 to 221 (TLGFAA), tyrosine 244, and 266 to 268 (YLH). The N-linked (GlcNAc...) asparagine glycan is linked to asparagine 306. 2 short sequence motifs (small peptide recognition) span residues 314-317 (DVSA) and 336-338 (QLQ). An N-linked (GlcNAc...) asparagine glycan is attached at asparagine 354. Positions 384 to 388 (SFFLW) match the Small peptide recognition motif. The N-linked (GlcNAc...) asparagine glycan is linked to asparagine 402. 3 short sequence motifs (small peptide recognition) span residues 410-413 (DLSR), 432-436 (KLLLL), and 456-458 (RLR). Asparagine 498 carries an N-linked (GlcNAc...) asparagine glycan. An N-linked (GlcNAc...) asparagine glycan is attached at asparagine 546. N-linked (GlcNAc...) asparagine glycans are attached at residues asparagine 650 and asparagine 655. Residues 707–727 (LTAVILASITIAILAAWLLIL) traverse the membrane as a helical segment. The Cytoplasmic portion of the chain corresponds to 728-1072 (RNNHLYKTSQ…SQPLIKPSSS (345 aa)). Residue threonine 764 is modified to Phosphothreonine. The region spanning 772–1067 (LTDENVIGKG…EWGKTSQPLI (296 aa)) is the Protein kinase domain. ATP is bound by residues 778–786 (IGKGCSGIV) and lysine 800. Tyrosine 851 and tyrosine 887 each carry phosphotyrosine. The active-site Proton acceptor is the aspartate 900. Residue serine 936 is modified to Phosphoserine. 2 positions are modified to phosphotyrosine: tyrosine 944 and tyrosine 951. Threonine 952 carries the phosphothreonine modification.

The protein belongs to the protein kinase superfamily. Ser/Thr protein kinase family. In terms of assembly, binds to RGF1; this interaction triggers the formation of heterodimers with SERK1. Phosphorylated and ubiquitinated upon interaction with RGF1, thus leading to activation a subsequent degradation. Post-translationally, autophosphorylated. As to expression, expressed in roots and hypocotyls.

It is found in the membrane. It carries out the reaction L-seryl-[protein] + ATP = O-phospho-L-seryl-[protein] + ADP + H(+). The catalysed reaction is L-threonyl-[protein] + ATP = O-phospho-L-threonyl-[protein] + ADP + H(+). Together with RGI1, RGI2, RGI3 and RGI4, acts as a receptor of RGF1, a peptide hormone that maintains the postembryonic root stem cell niche by regulating the expression levels and patterns of the transcription factor PLETHORA (PLT). Links RGF1 signal with its downstream components. The chain is LRR receptor-like serine/threonine-protein kinase RGI5 from Arabidopsis thaliana (Mouse-ear cress).